Reading from the N-terminus, the 326-residue chain is Cyclin-dependent kinase B2-1 (326 aa).

The region spanning 28–318 is the Protein kinase domain; that stretch reads YEKLEKVGEG…AKKAMEHPYF (291 aa). Residues 34–42 and K57 contribute to the ATP site; that span reads VGEGTYGKV. The residue at position 38 (T38) is a Phosphothreonine. A Phosphotyrosine modification is found at Y39. D159 serves as the catalytic Proton acceptor. T193 is modified (phosphothreonine).

The protein belongs to the protein kinase superfamily. CMGC Ser/Thr protein kinase family. CDC2/CDKX subfamily. Interacts with CYCB2-1 and CYCB2-2. Binding to CYCB2-1 or CYCB2-2 activates CDK kinase. Expressed in the dividing region of the root apex and the intercalary meristem of internodes.

It is found in the nucleus. The protein resides in the cytoplasm. It localises to the cytoskeleton. The protein localises to the spindle. Its subcellular location is the phragmoplast. It catalyses the reaction L-seryl-[protein] + ATP = O-phospho-L-seryl-[protein] + ADP + H(+). It carries out the reaction L-threonyl-[protein] + ATP = O-phospho-L-threonyl-[protein] + ADP + H(+). The catalysed reaction is [DNA-directed RNA polymerase] + ATP = phospho-[DNA-directed RNA polymerase] + ADP + H(+). Forms a complex with CYCB2-1 or CYCB2-2 that activates CDK kinase in tobacco BY2 cells during G2/M (mitosis) phases. May be involved in the regulation of the cell cycle at the G2/M transition. In Oryza sativa subsp. japonica (Rice), this protein is Cyclin-dependent kinase B2-1 (CDKB2-1).